The chain runs to 463 residues: MSTNQIILTDQGDNYVNVWSHVAQDLYNHYGETLYNSWFSKVNFIESSLNTVILCAPTNFVRDWIKSKYSMVILQLFQHYNNTIKSIEIITKELPGTTQTVIELPTKTFADIGSSELNSENIFSTLDVRFTFDNFVVGAPNELAYAAARAVAESSGAVSESNPLFLYGGVGLGKTHLMHAIGWYIKQNNPSRKVIYMSAEKFMYQFVKALRNKEVISFKEKFRSVDVLMIDDIQFICGKDSTQEEFFHTFNTLIDNNRQMVISCDRSPSDLDNIEDRIKSRLGWGLVADVHSTTYELRLGILESKIEQMNVKIPKDVIDFLASKIVSNVRELEGALNKVIAHSNFTLKEITLENTQNILRDLLRSNERIITVEDIQKKVASRYNIKLSDMSSSRRLREVARPRQIAMYLSKALTPKSLADIGKKFGKKDHTTVMHAIKKVEELLENDIELREEINLLMKILQN.

A domain I, interacts with DnaA modulators region spans residues 1–83 (MSTNQIILTD…LQLFQHYNNT (83 aa)). A domain II region spans residues 83-124 (TIKSIEIITKELPGTTQTVIELPTKTFADIGSSELNSENIFS). A domain III, AAA+ region region spans residues 125-343 (TLDVRFTFDN…GALNKVIAHS (219 aa)). Gly-171, Gly-173, Lys-174, and Thr-175 together coordinate ATP. The tract at residues 344-463 (NFTLKEITLE…INLLMKILQN (120 aa)) is domain IV, binds dsDNA.

Belongs to the DnaA family. As to quaternary structure, oligomerizes as a right-handed, spiral filament on DNA at oriC.

It localises to the cytoplasm. Plays an essential role in the initiation and regulation of chromosomal replication. ATP-DnaA binds to the origin of replication (oriC) to initiate formation of the DNA replication initiation complex once per cell cycle. Binds the DnaA box (a 9 base pair repeat at the origin) and separates the double-stranded (ds)DNA. Forms a right-handed helical filament on oriC DNA; dsDNA binds to the exterior of the filament while single-stranded (ss)DNA is stabiized in the filament's interior. The ATP-DnaA-oriC complex binds and stabilizes one strand of the AT-rich DNA unwinding element (DUE), permitting loading of DNA polymerase. After initiation quickly degrades to an ADP-DnaA complex that is not apt for DNA replication. Binds acidic phospholipids. The protein is Chromosomal replication initiator protein DnaA of Rickettsia felis (strain ATCC VR-1525 / URRWXCal2) (Rickettsia azadi).